Reading from the N-terminus, the 587-residue chain is 2-succinyl-5-enolpyruvyl-6-hydroxy-3-cyclohexene-1-carboxylate synthase (587 aa).

It belongs to the TPP enzyme family. MenD subfamily. As to quaternary structure, homodimer. The cofactor is Mg(2+). It depends on Mn(2+) as a cofactor. Thiamine diphosphate is required as a cofactor.

The catalysed reaction is isochorismate + 2-oxoglutarate + H(+) = 5-enolpyruvoyl-6-hydroxy-2-succinyl-cyclohex-3-ene-1-carboxylate + CO2. The protein operates within quinol/quinone metabolism; 1,4-dihydroxy-2-naphthoate biosynthesis; 1,4-dihydroxy-2-naphthoate from chorismate: step 2/7. Its pathway is cofactor biosynthesis; phylloquinone biosynthesis. Catalyzes the thiamine diphosphate-dependent decarboxylation of 2-oxoglutarate and the subsequent addition of the resulting succinic semialdehyde-thiamine pyrophosphate anion to isochorismate to yield 2-succinyl-5-enolpyruvyl-6-hydroxy-3-cyclohexene-1-carboxylate (SEPHCHC). This Prochlorococcus marinus (strain AS9601) protein is 2-succinyl-5-enolpyruvyl-6-hydroxy-3-cyclohexene-1-carboxylate synthase.